A 194-amino-acid chain; its full sequence is Large ribosomal subunit protein uL5 (194 aa).

This sequence belongs to the universal ribosomal protein uL5 family. Part of the 50S ribosomal subunit; part of the 5S rRNA/L5/L18/L25 subcomplex. Contacts the 5S rRNA and the P site tRNA. Forms a bridge to the 30S subunit in the 70S ribosome.

This is one of the proteins that bind and probably mediate the attachment of the 5S RNA into the large ribosomal subunit, where it forms part of the central protuberance. In the 70S ribosome it contacts protein S13 of the 30S subunit (bridge B1b), connecting the 2 subunits; this bridge is implicated in subunit movement. Contacts the P site tRNA; the 5S rRNA and some of its associated proteins might help stabilize positioning of ribosome-bound tRNAs. This Chlorobium luteolum (strain DSM 273 / BCRC 81028 / 2530) (Pelodictyon luteolum) protein is Large ribosomal subunit protein uL5.